Reading from the N-terminus, the 250-residue chain is Eukaryotic translation initiation factor 2 subunit 2 (250 aa).

The segment at 193–217 (CHTCKSPETQLTKDTRLFFLQCTNC) adopts a C4-type zinc-finger fold.

This sequence belongs to the eIF-2-beta/eIF-5 family. In terms of assembly, eukaryotic translation initiation factor 2 eIF2 is a heterotrimeric complex composed of an alpha, a beta and a gamma subunit.

It is found in the cytoplasm. Its subcellular location is the cytosol. Functionally, component of the eIF2 complex that functions in the early steps of protein synthesis by forming a ternary complex with GTP and initiator tRNA. This complex binds to a 40S ribosomal subunit, followed by mRNA binding to form a 43S pre-initiation complex (43S PIC). Junction of the 60S ribosomal subunit to form the 80S initiation complex is preceded by hydrolysis of the GTP bound to eIF2 and release of an eIF2-GDP binary complex. In order for eIF2 to recycle and catalyze another round of initiation, the GDP bound to eIF2 must exchange with GTP by way of a reaction catalyzed by eIF2B. The chain is Eukaryotic translation initiation factor 2 subunit 2 from Caenorhabditis elegans.